The primary structure comprises 330 residues: D-lactate dehydrogenase (330 aa).

Residues 155 to 156 (RI), D175, 206 to 207 (MP), N212, 233 to 235 (MAR), and D259 contribute to the NAD(+) site. The active site involves R235. The active site involves E264. H296 functions as the Proton donor in the catalytic mechanism.

The protein belongs to the D-isomer specific 2-hydroxyacid dehydrogenase family.

It carries out the reaction (R)-lactate + NAD(+) = pyruvate + NADH + H(+). The sequence is that of D-lactate dehydrogenase (ldhD) from Streptococcus pyogenes serotype M1.